The following is a 521-amino-acid chain: Bifunctional purine biosynthesis protein PurH (521 aa).

Positions 1–147 (MAKITRALIS…KNNADVTVVV (147 aa)) constitute an MGS-like domain.

Belongs to the PurH family.

The catalysed reaction is (6R)-10-formyltetrahydrofolate + 5-amino-1-(5-phospho-beta-D-ribosyl)imidazole-4-carboxamide = 5-formamido-1-(5-phospho-D-ribosyl)imidazole-4-carboxamide + (6S)-5,6,7,8-tetrahydrofolate. It carries out the reaction IMP + H2O = 5-formamido-1-(5-phospho-D-ribosyl)imidazole-4-carboxamide. Its pathway is purine metabolism; IMP biosynthesis via de novo pathway; 5-formamido-1-(5-phospho-D-ribosyl)imidazole-4-carboxamide from 5-amino-1-(5-phospho-D-ribosyl)imidazole-4-carboxamide (10-formyl THF route): step 1/1. It functions in the pathway purine metabolism; IMP biosynthesis via de novo pathway; IMP from 5-formamido-1-(5-phospho-D-ribosyl)imidazole-4-carboxamide: step 1/1. In Geobacter metallireducens (strain ATCC 53774 / DSM 7210 / GS-15), this protein is Bifunctional purine biosynthesis protein PurH.